Consider the following 156-residue polypeptide: ATP synthase subunit b (156 aa).

A helical membrane pass occupies residues 4–26 (GATFWGPMISFALFVWFTMKYVW).

It belongs to the ATPase B chain family. As to quaternary structure, F-type ATPases have 2 components, F(1) - the catalytic core - and F(0) - the membrane proton channel. F(1) has five subunits: alpha(3), beta(3), gamma(1), delta(1), epsilon(1). F(0) has three main subunits: a(1), b(2) and c(10-14). The alpha and beta chains form an alternating ring which encloses part of the gamma chain. F(1) is attached to F(0) by a central stalk formed by the gamma and epsilon chains, while a peripheral stalk is formed by the delta and b chains.

Its subcellular location is the cell inner membrane. F(1)F(0) ATP synthase produces ATP from ADP in the presence of a proton or sodium gradient. F-type ATPases consist of two structural domains, F(1) containing the extramembraneous catalytic core and F(0) containing the membrane proton channel, linked together by a central stalk and a peripheral stalk. During catalysis, ATP synthesis in the catalytic domain of F(1) is coupled via a rotary mechanism of the central stalk subunits to proton translocation. Functionally, component of the F(0) channel, it forms part of the peripheral stalk, linking F(1) to F(0). The sequence is that of ATP synthase subunit b from Alkalilimnicola ehrlichii (strain ATCC BAA-1101 / DSM 17681 / MLHE-1).